The sequence spans 94 residues: uncharacterized protein (94 aa).

Residues 1 to 23 form a disordered region; that stretch reads MVLLAGTRPQGGEARCMIPPPPS.

This is an uncharacterized protein from Homo sapiens (Human).